The sequence spans 247 residues: MFKAIVSADTLQETLDSVSVLVDECKIHLDDDTLSIRAVDPASVGMVDLDLAATAFESYEADGGLIGVNLSRLEDIAGMADAGQLIQLELDEETRKLHIQIDGLEYTLALIDPDSIRQEPDIPDLDLPAHVAIEGRDIDRAVTAADMVSDHIALGVDTGDDLFYVNAEGDTDDVHLELAPDQLIDLDAGDAHSLFSLDYLKDMNKAIPTTAEVELELGDEFPIKLHFDIADAQGHVTYMLAPRIQSN.

It belongs to the PCNA family. In terms of assembly, homotrimer. The subunits circularize to form a toroid; DNA passes through its center. Replication factor C (RFC) is required to load the toroid on the DNA.

In terms of biological role, sliding clamp subunit that acts as a moving platform for DNA processing. Responsible for tethering the catalytic subunit of DNA polymerase and other proteins to DNA during high-speed replication. The protein is DNA polymerase sliding clamp of Halobacterium salinarum (strain ATCC 29341 / DSM 671 / R1).